The sequence spans 378 residues: Nitronate monooxygenase (378 aa).

Residues 1-15 (MHFPGHSSKKEESAQ) constitute a propeptide that is removed on maturation. FMN is bound at residue 37–39 (PMY). Residue histidine 196 is the Proton acceptor of the active site. Histidine 196 provides a ligand contact to substrate. FMN is bound by residues 229–231 (AGG) and 252–253 (GT).

This sequence belongs to the nitronate monooxygenase family. NMO class II subfamily. In terms of assembly, homodimer. FMN serves as cofactor.

It carries out the reaction ethylnitronate + O2 = chemical entity + acetaldehyde + nitrite + H(+). Catalyzes the oxidation of alkyl nitronates to produce the corresponding carbonyl compounds and nitrites. Anionic forms of nitroalkanes are much better substrates than are neutral forms. This chain is Nitronate monooxygenase (ncd-2), found in Neurospora crassa (strain ATCC 24698 / 74-OR23-1A / CBS 708.71 / DSM 1257 / FGSC 987).